We begin with the raw amino-acid sequence, 950 residues long: Bifunctional glutamine synthetase adenylyltransferase/adenylyl-removing enzyme (950 aa).

Residues 1–443 (MSLPSPLLPV…VFVTLIGDEE (443 aa)) are adenylyl removase. Residues 450-950 (ERHFNELWDM…WQEWLESSTI (501 aa)) are adenylyl transferase.

The protein belongs to the GlnE family. It depends on Mg(2+) as a cofactor.

The catalysed reaction is [glutamine synthetase]-O(4)-(5'-adenylyl)-L-tyrosine + phosphate = [glutamine synthetase]-L-tyrosine + ADP. It catalyses the reaction [glutamine synthetase]-L-tyrosine + ATP = [glutamine synthetase]-O(4)-(5'-adenylyl)-L-tyrosine + diphosphate. Functionally, involved in the regulation of glutamine synthetase GlnA, a key enzyme in the process to assimilate ammonia. When cellular nitrogen levels are high, the C-terminal adenylyl transferase (AT) inactivates GlnA by covalent transfer of an adenylyl group from ATP to specific tyrosine residue of GlnA, thus reducing its activity. Conversely, when nitrogen levels are low, the N-terminal adenylyl removase (AR) activates GlnA by removing the adenylyl group by phosphorolysis, increasing its activity. The regulatory region of GlnE binds the signal transduction protein PII (GlnB) which indicates the nitrogen status of the cell. The protein is Bifunctional glutamine synthetase adenylyltransferase/adenylyl-removing enzyme of Vibrio vulnificus (strain YJ016).